Consider the following 391-residue polypeptide: Formate-dependent phosphoribosylglycinamide formyltransferase (391 aa).

N(1)-(5-phospho-beta-D-ribosyl)glycinamide-binding positions include Glu20–Leu21 and Glu80. ATP-binding positions include Arg112, Lys153, Ser158 to Gln163, Glu193 to Ile196, and Glu201. The 190-residue stretch at Arg117–Gln306 folds into the ATP-grasp domain. Positions 265 and 277 each coordinate Mg(2+). N(1)-(5-phospho-beta-D-ribosyl)glycinamide contacts are provided by residues Asp284, Lys354, and Arg361–Arg362.

This sequence belongs to the PurK/PurT family. Homodimer.

It carries out the reaction N(1)-(5-phospho-beta-D-ribosyl)glycinamide + formate + ATP = N(2)-formyl-N(1)-(5-phospho-beta-D-ribosyl)glycinamide + ADP + phosphate + H(+). Its pathway is purine metabolism; IMP biosynthesis via de novo pathway; N(2)-formyl-N(1)-(5-phospho-D-ribosyl)glycinamide from N(1)-(5-phospho-D-ribosyl)glycinamide (formate route): step 1/1. Functionally, involved in the de novo purine biosynthesis. Catalyzes the transfer of formate to 5-phospho-ribosyl-glycinamide (GAR), producing 5-phospho-ribosyl-N-formylglycinamide (FGAR). Formate is provided by PurU via hydrolysis of 10-formyl-tetrahydrofolate. In Shewanella baltica (strain OS185), this protein is Formate-dependent phosphoribosylglycinamide formyltransferase.